We begin with the raw amino-acid sequence, 110 residues long: Phosphoribosyl-ATP pyrophosphatase (110 aa).

Belongs to the PRA-PH family.

It localises to the cytoplasm. The enzyme catalyses 1-(5-phospho-beta-D-ribosyl)-ATP + H2O = 1-(5-phospho-beta-D-ribosyl)-5'-AMP + diphosphate + H(+). It participates in amino-acid biosynthesis; L-histidine biosynthesis; L-histidine from 5-phospho-alpha-D-ribose 1-diphosphate: step 2/9. This is Phosphoribosyl-ATP pyrophosphatase from Pseudomonas savastanoi pv. phaseolicola (strain 1448A / Race 6) (Pseudomonas syringae pv. phaseolicola (strain 1448A / Race 6)).